Consider the following 417-residue polypeptide: S-inosyl-L-homocysteine hydrolase (417 aa).

The substrate site is built by Asp124 and Glu149. Residue 150 to 152 (TTT) participates in NAD(+) binding. Positions 179 and 183 each coordinate substrate. NAD(+) contacts are provided by residues Asn184, 213–218 (GYGWCG), Glu236, Asn271, 292–294 (SGH), and Asn339.

Belongs to the adenosylhomocysteinase family. The cofactor is NAD(+).

The protein localises to the cytoplasm. The enzyme catalyses S-inosyl-L-homocysteine + H2O = L-homocysteine + inosine. The protein operates within amino-acid biosynthesis; S-adenosyl-L-methionine biosynthesis. Catalyzes the hydrolysis of S-inosyl-L-homocysteine (SIH) to L-homocysteine (Hcy) and inosine. Likely functions in a S-adenosyl-L-methionine (SAM) recycling pathway from S-adenosyl-L-homocysteine (SAH) produced from SAM-dependent methylation reactions. Can also catalyze the reverse reaction in vitro, i.e. the synthesis of SIH from Hcy and inosine. The protein is S-inosyl-L-homocysteine hydrolase of Methanothermobacter thermautotrophicus (strain ATCC 29096 / DSM 1053 / JCM 10044 / NBRC 100330 / Delta H) (Methanobacterium thermoautotrophicum).